A 1054-amino-acid polypeptide reads, in one-letter code: MTGIGEMFLAAFLQALFQTLVSEPFRSFFKRRELNENLLERLSTALLTITAVLIDAEEKQITNPVVEKWVNELRDVVYHAEDALDDIATEALRLNIGAESSSSNRLRQLRGRMSLGDFLDGNSEHLETRLEKVTIRLERLASQRNILGLKELTAMIPKQRLPTTSLVDESEVFGRDDDKDEIMRFLIPENGKDNGITVVAIVGIGGVGKTTLSQLLYNDQHVRSYFGTKVWAHVSEEFDVFKITKKVYESVTSRPCEFTDLDVLQVKLKERLTGTGLPFLLVLDDLWNENFADWDLLRQPFIHAAQGSQILVTTRSQRVASIMCAVHVHNLQPLSDGDCWSLFMKTVFGNQEPCLNREIGDLAERIVHKCRGLPLAVKTLGGVLRFEGKVIEWERVLSSRIWDLPADKSNLLPVLRVSYYYLPAHLKRCFAYCSIFPKGHAFEKDKVVLLWMAEGFLQQTRSSKNLEELGNEYFSELESRSLLQKTKTRYIMHDFINELAQFASGEFSSKFEDGCKLQVSERTRYLSYLRDNYAEPMEFEALREVKFLRTFLPLSLTNSSRSCCLDQMVSEKLLPTLTRLRVLSLSHYKIARLPPDFFKNISHARFLDLSRTELEKLPKSLCYMYNLQTLLLSYCSSLKELPTDISNLINLRYLDLIGTKLRQMPRRFGRLKSLQTLTTFFVSASDGSRISELGGLHDLHGKLKIVELQRVVDVADAAEANLNSKKHLREIDFVWRTGSSSSENNTNPHRTQNEAEVFEKLRPHRHIEKLAIERYKGRRFPDWLSDPSFSRIVCIRLRECQYCTSLPSLGQLPCLKELHISGMVGLQSIGRKFYFSDQQLRDQDQQPFRSLETLRFDNLPDWQEWLDVRVTRGDLFPSLKKLFILRCPELTGTLPTFLPSLISLHIYKCGLLDFQPDHHEYSYRNLQTLSIKSSCDTLVKFPLNHFANLDKLEVDQCTSLYSLELSNEHLRGPNALRNLRINDCQNLQLLPKLNALPQNLQVTITNCRYLRQPMEQQPQYHHPQFHLPRSNVSGSPKSHGSHRSYDSRSSSRYD.

Leucine-zipper stretches follow at residues 9 to 20 (LAAFLQALFQTL) and 39 to 53 (LERL…TAVL). A coiled-coil region spans residues 117 to 147 (DFLDGNSEHLETRLEKVTIRLERLASQRNIL). Residues 152–462 (LTAMIPKQRL…AEGFLQQTRS (311 aa)) form the NB-ARC domain. Residue 203–210 (GIGGVGKT) coordinates ATP. 5 LRR repeats span residues 579 to 600 (RLRV…FFKN), 603 to 624 (HARF…LCYM), 626 to 648 (NLQT…ISNL), 650 to 672 (NLRY…GRLK), and 676 to 697 (TLTT…GGLH). A disordered region spans residues 1018-1054 (PQYHHPQFHLPRSNVSGSPKSHGSHRSYDSRSSSRYD). Basic and acidic residues predominate over residues 1043–1054 (RSYDSRSSSRYD).

The protein belongs to the disease resistance NB-LRR family. RPP13 subfamily.

In terms of biological role, potential disease resistance protein. In Arabidopsis thaliana (Mouse-ear cress), this protein is Putative disease resistance RPP13-like protein 1 (RPPL1).